A 183-amino-acid chain; its full sequence is Ribosome-recycling factor (183 aa).

It belongs to the RRF family.

Its subcellular location is the cytoplasm. In terms of biological role, responsible for the release of ribosomes from messenger RNA at the termination of protein biosynthesis. May increase the efficiency of translation by recycling ribosomes from one round of translation to another. The sequence is that of Ribosome-recycling factor from Clostridium tetani (strain Massachusetts / E88).